We begin with the raw amino-acid sequence, 337 residues long: Putative 4-hydroxythreonine-4-phosphate dehydrogenase 2 (337 aa).

A divalent metal cation contacts are provided by H173, H217, and H274.

Belongs to the PdxA family. As to quaternary structure, homodimer. The cofactor is Zn(2+). Requires Mg(2+) as cofactor. Co(2+) is required as a cofactor.

The protein localises to the cytoplasm. It carries out the reaction 4-(phosphooxy)-L-threonine + NAD(+) = 3-amino-2-oxopropyl phosphate + CO2 + NADH. Its pathway is cofactor biosynthesis; pyridoxine 5'-phosphate biosynthesis; pyridoxine 5'-phosphate from D-erythrose 4-phosphate: step 4/5. Catalyzes the NAD(P)-dependent oxidation of 4-(phosphooxy)-L-threonine (HTP) into 2-amino-3-oxo-4-(phosphooxy)butyric acid which spontaneously decarboxylates to form 3-amino-2-oxopropyl phosphate (AHAP). The sequence is that of Putative 4-hydroxythreonine-4-phosphate dehydrogenase 2 from Pseudomonas aeruginosa (strain ATCC 15692 / DSM 22644 / CIP 104116 / JCM 14847 / LMG 12228 / 1C / PRS 101 / PAO1).